We begin with the raw amino-acid sequence, 280 residues long: 2-dehydro-3-deoxyphosphooctonate aldolase (280 aa).

This sequence belongs to the KdsA family.

The protein resides in the cytoplasm. The enzyme catalyses D-arabinose 5-phosphate + phosphoenolpyruvate + H2O = 3-deoxy-alpha-D-manno-2-octulosonate-8-phosphate + phosphate. It participates in carbohydrate biosynthesis; 3-deoxy-D-manno-octulosonate biosynthesis; 3-deoxy-D-manno-octulosonate from D-ribulose 5-phosphate: step 2/3. The protein operates within bacterial outer membrane biogenesis; lipopolysaccharide biosynthesis. The sequence is that of 2-dehydro-3-deoxyphosphooctonate aldolase from Thioalkalivibrio sulfidiphilus (strain HL-EbGR7).